A 246-amino-acid polypeptide reads, in one-letter code: Sensory transduction protein LytT (246 aa).

Residues 3–117 enclose the Response regulatory domain; that stretch reads KVLVVDDEML…RIVQTLKKYK (115 aa). Positions 142–246 constitute an HTH LytTR-type domain; that stretch reads LALPIEESIV…AKELKKLLRI (105 aa).

Phosphorylated by LytS.

Its subcellular location is the cytoplasm. Its function is as follows. Member of the two-component regulatory system LytS/LytT that probably regulates genes involved in cell wall metabolism. In Bacillus cereus (strain ATCC 14579 / DSM 31 / CCUG 7414 / JCM 2152 / NBRC 15305 / NCIMB 9373 / NCTC 2599 / NRRL B-3711), this protein is Sensory transduction protein LytT (lytT).